The sequence spans 712 residues: Protein SDA1 homolog (712 aa).

Position 234 is a phosphothreonine (Thr-234). Ser-236 bears the Phosphoserine mark. 2 disordered regions span residues 488 to 573 and 662 to 712; these read TIDI…DMRI and VNEH…KKMK. 2 stretches are compositionally biased toward acidic residues: residues 491–501 and 516–559; these read IESEDDTDSND and GADD…ESGE. Basic and acidic residues predominate over residues 560 to 572; the sequence is ESAKAKKEKKDMR. Composition is skewed to basic residues over residues 671-692 and 700-712; these read REKR…KVKK and ALRK…KKMK.

This sequence belongs to the SDA1 family.

The protein localises to the nucleus. It is found in the nucleolus. Its function is as follows. Required for 60S pre-ribosomal subunits export to the cytoplasm. In Drosophila melanogaster (Fruit fly), this protein is Protein SDA1 homolog (Mys45A).